We begin with the raw amino-acid sequence, 110 residues long: UPF0122 protein YlxM (110 aa).

Belongs to the UPF0122 family.

Functionally, might take part in the signal recognition particle (SRP) pathway. This is inferred from the conservation of its genetic proximity to ftsY/ffh. May be a regulatory protein. In Bacillus subtilis (strain 168), this protein is UPF0122 protein YlxM (ylxM).